A 234-amino-acid polypeptide reads, in one-letter code: Leucyl/phenylalanyl-tRNA--protein transferase (234 aa).

The protein belongs to the L/F-transferase family.

It is found in the cytoplasm. It carries out the reaction N-terminal L-lysyl-[protein] + L-leucyl-tRNA(Leu) = N-terminal L-leucyl-L-lysyl-[protein] + tRNA(Leu) + H(+). The catalysed reaction is N-terminal L-arginyl-[protein] + L-leucyl-tRNA(Leu) = N-terminal L-leucyl-L-arginyl-[protein] + tRNA(Leu) + H(+). It catalyses the reaction L-phenylalanyl-tRNA(Phe) + an N-terminal L-alpha-aminoacyl-[protein] = an N-terminal L-phenylalanyl-L-alpha-aminoacyl-[protein] + tRNA(Phe). In terms of biological role, functions in the N-end rule pathway of protein degradation where it conjugates Leu, Phe and, less efficiently, Met from aminoacyl-tRNAs to the N-termini of proteins containing an N-terminal arginine or lysine. This chain is Leucyl/phenylalanyl-tRNA--protein transferase, found in Shigella boydii serotype 18 (strain CDC 3083-94 / BS512).